The following is a 541-amino-acid chain: Probable inorganic phosphate transporter 1-8 (541 aa).

Residues 1 to 28 (MARQEQQQHLQVLSALDAAKTQWYHFTA) lie on the Cytoplasmic side of the membrane. A helical transmembrane segment spans residues 29-49 (IVVAGMGFFTDAYDLFCISLV). The Extracellular segment spans residues 50–74 (TKLLGRIYYTDLAKENPGSLPPNVA). A helical membrane pass occupies residues 75–95 (AAVNGVAFCGTLAGQLFFGWL). At 96–102 (GDKLGRK) the chain is on the cytoplasmic side. A helical transmembrane segment spans residues 103–123 (SVYGMTLLMMVICSIASGLSF). Over 124–126 (SHT) the chain is Extracellular. A helical transmembrane segment spans residues 127–147 (PTSVMATLCFFRFWLGFGIGG). Residues 148–168 (DYPLSATIMSEYANKKTRGAF) are Cytoplasmic-facing. A helical membrane pass occupies residues 169–189 (IAAVFAMQGFGILAGGIVTLI). Topologically, residues 190–215 (ISSAFRAGFPAPAYQDDRAGSTVRQA) are extracellular. A helical membrane pass occupies residues 216-236 (DYVWRIILMLGAMPALLTYYW). Residues 237 to 297 (RMKMPETARY…GLFSRQFARR (61 aa)) lie on the Cytoplasmic side of the membrane. The helical transmembrane segment at 298–318 (HGLHLVGTATTWFLLDIAFYS) threads the bilayer. Topologically, residues 319–353 (QNLFQKDIFTSINWIPKAKTMSALEEVFRIARAQT) are extracellular. The chain crosses the membrane as a helical span at residues 354 to 374 (LIALCGTVPGYWFTVFLIDIV). Residues 375 to 376 (GR) are Cytoplasmic-facing. A helical membrane pass occupies residues 377-397 (FAIQLLGFFMMTVFMLGLAVP). Residues 398 to 404 (YHHWTTK) lie on the Extracellular side of the membrane. Residues 405–425 (GNHIGFVVMYAFTFFFANFGP) form a helical membrane-spanning segment. Residues 426–447 (NSTTFIVPAEIFPARLRSTCHG) are Cytoplasmic-facing. The helical transmembrane segment at 448 to 468 (ISAAAGKAGAIIGSFGFLYAA) threads the bilayer. At 469–486 (QDPHKPDAGYKPGIGVRN) the chain is on the extracellular side. Residues 487 to 507 (SLFVLAGCNLLGFICTFLVPE) form a helical membrane-spanning segment. The Cytoplasmic segment spans residues 508–541 (SKGKSLEEMSGEAEDDDDEVAAAGGGAAVRPQTA). The segment at 514–541 (EEMSGEAEDDDDEVAAAGGGAAVRPQTA) is disordered. A compositionally biased stretch (acidic residues) spans 516–527 (MSGEAEDDDDEV).

It belongs to the major facilitator superfamily. Phosphate:H(+) symporter (TC 2.A.1.9) family.

Its subcellular location is the membrane. Its function is as follows. High-affinity transporter for external inorganic phosphate. This Oryza sativa subsp. japonica (Rice) protein is Probable inorganic phosphate transporter 1-8 (PHT1-8).